Consider the following 153-residue polypeptide: Catabolic 3-dehydroquinase (153 aa).

The Proton acceptor role is filled by Y24. Positions 75, 81, and 88 each coordinate substrate. H101 functions as the Proton donor in the catalytic mechanism. Substrate contacts are provided by residues 102-103 (VS) and R112.

This sequence belongs to the type-II 3-dehydroquinase family. As to quaternary structure, homododecamer. Adopts a ring-like structure, composed of an arrangement of two hexameric rings stacked on top of one another.

The enzyme catalyses 3-dehydroquinate = 3-dehydroshikimate + H2O. It participates in aromatic compound metabolism; 3,4-dihydroxybenzoate biosynthesis; 3,4-dihydroxybenzoate from 3-dehydroquinate: step 1/2. Its function is as follows. Is involved in the catabolism of quinate. Allows the utilization of quinate as carbon source via the beta-ketoadipate pathway. The polypeptide is Catabolic 3-dehydroquinase (Aspergillus oryzae (strain ATCC 42149 / RIB 40) (Yellow koji mold)).